Consider the following 130-residue polypeptide: Large ribosomal subunit protein bL12 (130 aa).

It belongs to the bacterial ribosomal protein bL12 family. As to quaternary structure, homodimer. Part of the ribosomal stalk of the 50S ribosomal subunit. Forms a multimeric L10(L12)X complex, where L10 forms an elongated spine to which 2 to 4 L12 dimers bind in a sequential fashion. Binds GTP-bound translation factors.

Functionally, forms part of the ribosomal stalk which helps the ribosome interact with GTP-bound translation factors. Is thus essential for accurate translation. This is Large ribosomal subunit protein bL12 from Herpetosiphon aurantiacus (strain ATCC 23779 / DSM 785 / 114-95).